We begin with the raw amino-acid sequence, 81 residues long: Large ribosomal subunit protein bL31B (81 aa).

Belongs to the bacterial ribosomal protein bL31 family. Type B subfamily. Part of the 50S ribosomal subunit.

The polypeptide is Large ribosomal subunit protein bL31B (Exiguobacterium sibiricum (strain DSM 17290 / CCUG 55495 / CIP 109462 / JCM 13490 / 255-15)).